The primary structure comprises 254 residues: UPF0246 protein FTN_1542 (254 aa).

It belongs to the UPF0246 family.

The polypeptide is UPF0246 protein FTN_1542 (Francisella tularensis subsp. novicida (strain U112)).